Consider the following 62-residue polypeptide: Defensin BmKDfsin6 (62 aa).

The signal sequence occupies residues 1–24 (MKVIAILFLLAFVLCTMEITMVEA). 3 disulfide bridges follow: Cys28–Cys49, Cys35–Cys57, and Cys39–Cys59.

Belongs to the invertebrate defensin family. Type 2 subfamily. As to expression, highly expressed in non-venom gland (hemolymph) and moderately expressed in venom gland.

The protein localises to the secreted. In terms of biological role, antibacterial peptide active against Gram-positive bacteria, but not on Gram-negative bacteria. Also has weak blocking activity on Kv1.1/KCNA1, Kv1.2/KCNA2, Kv1.3/KCNA3, KCa3.1/KCNN4/IK, KCa2.3/KCNN3/SK3 and Kv11.1/KCNH2/ERG1 channels (tested at 1 uM). It inhibits potassium channel current by interacting with the pore region. This chain is Defensin BmKDfsin6, found in Olivierus martensii (Manchurian scorpion).